We begin with the raw amino-acid sequence, 430 residues long: Xaa-Pro aminopeptidase (430 aa).

Residues Asp-254, Asp-265, His-348, Glu-377, and Glu-400 each coordinate Mn(2+).

The protein belongs to the peptidase M24B family. In terms of assembly, homotetramer. Mn(2+) is required as a cofactor.

It carries out the reaction Release of any N-terminal amino acid, including proline, that is linked to proline, even from a dipeptide or tripeptide.. The chain is Xaa-Pro aminopeptidase (pepP) from Haemophilus influenzae (strain ATCC 51907 / DSM 11121 / KW20 / Rd).